A 292-amino-acid chain; its full sequence is Coatomer subunit epsilon-1 (292 aa).

This sequence belongs to the COPE family. In terms of assembly, oligomeric complex that consists of at least the alpha, beta, beta', gamma, delta, epsilon and zeta subunits.

It localises to the cytoplasm. It is found in the golgi apparatus membrane. The protein localises to the cytoplasmic vesicle. Its subcellular location is the COPI-coated vesicle membrane. Its function is as follows. The coatomer is a cytosolic protein complex that binds to dilysine motifs and reversibly associates with Golgi non-clathrin-coated vesicles, which further mediate biosynthetic protein transport from the ER, via the Golgi up to the trans Golgi network. The coatomer complex is required for budding from Golgi membranes, and is essential for the retrograde Golgi-to-ER transport of dilysine-tagged proteins. This is Coatomer subunit epsilon-1 from Arabidopsis thaliana (Mouse-ear cress).